The following is a 467-amino-acid chain: Neurexin-1-beta (467 aa).

The signal sequence occupies residues 1–45 (MYQRMLRCGAELGSPGGGGGGAGGRLALLWIVPLTLSGLLGVAWG). The Extracellular segment spans residues 46 to 391 (ASSLGAHHIH…EVIRESSSTT (346 aa)). Residues 86–284 (YIFSKGGGQI…DANIAIVGNV (199 aa)) form the Laminin G-like domain. The Ca(2+) site is built by Asp-136 and Val-153. The N-linked (GlcNAc...) asparagine glycan is linked to Asn-183. The tract at residues 200 to 229 (GNNDNERLAIARQRIPYRLGRVVDEWLLDK) is essential for interaction with CBLN1; modulates interaction affinity with NLGN1, NLGN2 and NLGN3; prevents interaction with DAG1/alpha-dystroglycan; modulates interaction with alpha-latrotoxin. Ca(2+) contacts are provided by Ile-235 and Asn-237. Residues 318–380 (LATSTARRGN…AGGREPYPGS (63 aa)) are disordered. The segment covering 324–339 (RRGNSPTKEPVSQTTD) has biased composition (polar residues). An O-linked (Xyl...) (heparan sulfate) serine glycan is attached at Ser-345. A helical transmembrane segment spans residues 392 to 412 (GMVVGIVAAAALCILILLYAM). Over 413–467 (YKYRNRDEGSYHVDESRNYISNSAQSNGAVVKEKQPSSAKSANKNKKNKDKEYYV) the chain is Cytoplasmic. The segment at 434–467 (NSAQSNGAVVKEKQPSSAKSANKNKKNKDKEYYV) is disordered. Residues Ser-449, Ser-450, and Ser-453 each carry the phosphoserine modification.

It belongs to the neurexin family. In terms of assembly, the cytoplasmic C-terminal region binds to CASK. Binds NLGN1, NLGN2 and NLGN3, DAG1 (alpha-dystroglycan) and alpha-latrotoxin. Binding to neuroligins is calcium-dependent, and the binding preference ranks as follow: NLGN1 &gt; NLGN4 &gt;&gt; NLGN3 &gt; NLGN2. Interacts with CBLN2 and more weakly with CBLN4. Interacts with CBLN1; interaction is CBLN1 hexamer form-dependent; CBLN1-binding is calcium-independent; isoform 1b does not interact with CBLN1. Interacts with CLSTN3. In terms of processing, O-glycosylated; contains heparan sulfate. Heparan sulfate attachment is required for synapse development by mediating interactions with neuroligins.

It localises to the presynaptic cell membrane. Neuronal cell surface protein involved in cell recognition and cell adhesion by forming intracellular junctions through binding to neuroligins. Plays a role in formation of synaptic junctions. Functions as part of a trans-synaptic complex by binding to cerebellins and postsynaptic GRID1. This interaction helps regulate the activity of NMDA and AMPA receptors at hippocampal synapses without affecting synapse formation. NRXN1B-CBLN2-GRID1 complex transduce presynaptic signals into postsynaptic NMDAR response. The polypeptide is Neurexin-1-beta (Bos taurus (Bovine)).